The sequence spans 445 residues: Chromosome partition protein MukF (445 aa).

The interval 213–241 (LSETSATLKELQDTLQAAGDELQTQILDI) is leucine-zipper.

Belongs to the MukF family. In terms of assembly, interacts, and probably forms a ternary complex, with MukE and MukB via its C-terminal region. The complex formation is stimulated by calcium or magnesium. It is required for an interaction between MukE and MukB.

The protein resides in the cytoplasm. It is found in the nucleoid. Its function is as follows. Involved in chromosome condensation, segregation and cell cycle progression. May participate in facilitating chromosome segregation by condensation DNA from both sides of a centrally located replisome during cell division. Not required for mini-F plasmid partitioning. Probably acts via its interaction with MukB and MukE. Overexpression results in anucleate cells. It has a calcium binding activity. This chain is Chromosome partition protein MukF, found in Vibrio atlanticus (strain LGP32) (Vibrio splendidus (strain Mel32)).